The chain runs to 254 residues: Alcohol dehydrogenase (254 aa).

Residue 10–33 participates in NAD(+) binding; sequence FVAGLGGIGLDTSRELVKRDLKNL. S138 lines the substrate pocket. Catalysis depends on Y151, which acts as the Proton acceptor.

This sequence belongs to the short-chain dehydrogenases/reductases (SDR) family. In terms of assembly, homodimer.

It carries out the reaction a primary alcohol + NAD(+) = an aldehyde + NADH + H(+). It catalyses the reaction a secondary alcohol + NAD(+) = a ketone + NADH + H(+). This Drosophila subobscura (Fruit fly) protein is Alcohol dehydrogenase (Adh).